Reading from the N-terminus, the 99-residue chain is Plastocyanin B'/B'' (99 aa).

One can recognise a Plastocyanin-like domain in the interval 1 to 99 (IEVLLGSDDG…AGMVGKVTVN (99 aa)). 4 residues coordinate Cu cation: H37, C84, H87, and M92.

Belongs to the plastocyanin family. It depends on Cu(2+) as a cofactor.

Its subcellular location is the plastid. It is found in the chloroplast thylakoid membrane. Functionally, participates in electron transfer between P700 and the cytochrome b6-f complex in photosystem I. The protein is Plastocyanin B'/B'' of Nicotiana tabacum (Common tobacco).